A 152-amino-acid chain; its full sequence is Single-stranded DNA-binding protein, mitochondrial (152 aa).

A mitochondrion-targeting transit peptide spans 1-16 (MFRRPVLQVFRQFVRH). The 112-residue stretch at 30–141 (LNRVQLLGRV…IIAGKKLVVH (112 aa)) folds into the SSB domain. 2 positions are modified to phosphoserine: serine 67 and serine 79. An N6-acetyllysine modification is found at lysine 113. N6-succinyllysine is present on lysine 122.

As to quaternary structure, homotetramer. Interacts with MPG/AAG, through inhibition of its glycosylase activity it potentially prevents formation of DNA breaks in ssDNA, ensuring that base removal primarily occurs in dsDNA. Interacts with POLDIP2. Interacts with PRIMPOL. As to expression, expressed in all the layers of the retina (at protein level).

Its subcellular location is the mitochondrion. It localises to the mitochondrion matrix. The protein resides in the mitochondrion nucleoid. Binds preferentially and cooperatively to pyrimidine rich single-stranded DNA (ss-DNA). In vitro, required to maintain the copy number of mitochondrial DNA (mtDNA) and plays a crucial role during mtDNA replication by stimulating the activity of the replisome components POLG and TWNK at the replication fork. Promotes the activity of the gamma complex polymerase POLG, largely by organizing the template DNA and eliminating secondary structures to favor ss-DNA conformations that facilitate POLG activity. In addition it is able to promote the 5'-3' unwinding activity of the mtDNA helicase TWNK. May also function in mtDNA repair. The protein is Single-stranded DNA-binding protein, mitochondrial (Ssbp1) of Mus musculus (Mouse).